The sequence spans 170 residues: Sec-independent protein translocase protein TATA, chloroplastic (170 aa).

The N-terminal 61 residues, 1-61 (MGIPVVVPVA…GGSGGDLAAV (61 aa)), are a transit peptide targeting the chloroplast. The Lumenal portion of the chain corresponds to 62–84 (AASVAARPRRAGSGGGGALGCKC). A helical transmembrane segment spans residues 85-105 (LFGLGVPELAVIAGVAALVFG). The Stromal segment spans residues 106-170 (PKQLPEIGRS…LEASSSKESA (65 aa)). Basic and acidic residues predominate over residues 130–139 (FETELKKEPG). The disordered stretch occupies residues 130-170 (FETELKKEPGEGGDQPPPATPTAVSGGEEKGLEASSSKESA).

It belongs to the TatA/E family. In thylakoid membranes, TATC and TATB form a large receptor complex, containing about eight TATC-TATB pairs, which binds the precursor protein. Twin arginine signal peptide promotes pH-triggered docking of TATA oligomers to TATC-TATB receptor complex, inducing a conformational switch of TATA that results in activation of the translocase. TATA dissociates from TATC-TATB upon completion of translocation.

The protein resides in the plastid. The protein localises to the chloroplast thylakoid membrane. Its function is as follows. Part of the twin-arginine translocation (Tat) system that transports large folded proteins containing a characteristic twin-arginine motif in their signal peptide across the thylakoid membrane. Involved in delta pH-dependent protein transport required for chloroplast development, especially thylakoid membrane formation. TATC and TATB mediate precursor recognition, whereas TATA facilitates translocation. This Zea mays (Maize) protein is Sec-independent protein translocase protein TATA, chloroplastic.